We begin with the raw amino-acid sequence, 656 residues long: Chaperone protein DnaK (656 aa).

At Thr-204 the chain carries Phosphothreonine; by autocatalysis. Residues 602-656 (KLAERVYAKKGGAAGAPPGGEAEGEPQAQAGGKKEDVVDAEFEEVKDEKKKDEDK) form a disordered region. Over residues 620–632 (GGEAEGEPQAQAG) the composition is skewed to low complexity. The span at 647–656 (KDEKKKDEDK) shows a compositional bias: basic and acidic residues.

The protein belongs to the heat shock protein 70 family.

Its function is as follows. Acts as a chaperone. The protein is Chaperone protein DnaK of Coxiella burnetii (strain CbuG_Q212) (Coxiella burnetii (strain Q212)).